A 262-amino-acid chain; its full sequence is Granzyme A (262 aa).

Residues methionine 1–cysteine 26 form the signal peptide. The propeptide at glutamate 27 to lysine 28 is activation peptide. The Peptidase S1 domain occupies isoleucine 29–lysine 259. An intrachain disulfide couples cysteine 54 to cysteine 70. Active-site charge relay system residues include histidine 69 and aspartate 114. 3 disulfides stabilise this stretch: cysteine 148–cysteine 218, cysteine 179–cysteine 197, and cysteine 208–cysteine 234. Asparagine 170 carries N-linked (GlcNAc...) asparagine glycosylation. The active-site Charge relay system is the serine 212.

The protein belongs to the peptidase S1 family. Granzyme subfamily. As to quaternary structure, homodimer; disulfide-linked. Interacts with APEX1.

It is found in the secreted. The protein localises to the cytoplasmic granule. The enzyme catalyses Hydrolysis of proteins, including fibronectin, type IV collagen and nucleolin. Preferential cleavage: -Arg-|-Xaa-, -Lys-|-Xaa- &gt;&gt; -Phe-|-Xaa- in small molecule substrates.. Abundant protease in the cytosolic granules of cytotoxic T-cells and NK-cells which activates caspase-independent pyroptosis when delivered into the target cell through the immunological synapse. It cleaves after Lys or Arg. Once delivered into the target cell, acts by catalyzing cleavage of gasdermin-B (GSDMB), releasing the pore-forming moiety of GSDMB, thereby triggering pyroptosis and target cell death. Cleaves APEX1 after 'Lys-31' and destroys its oxidative repair activity. Cleaves the nucleosome assembly protein SET after 'Lys-189', which disrupts its nucleosome assembly activity and allows the SET complex to translocate into the nucleus to nick and degrade the DNA. The protein is Granzyme A of Homo sapiens (Human).